Here is a 140-residue protein sequence, read N- to C-terminus: ATP synthase epsilon chain (140 aa).

This sequence belongs to the ATPase epsilon chain family. In terms of assembly, F-type ATPases have 2 components, CF(1) - the catalytic core - and CF(0) - the membrane proton channel. CF(1) has five subunits: alpha(3), beta(3), gamma(1), delta(1), epsilon(1). CF(0) has three main subunits: a, b and c.

It is found in the cell inner membrane. Functionally, produces ATP from ADP in the presence of a proton gradient across the membrane. In Herminiimonas arsenicoxydans, this protein is ATP synthase epsilon chain.